We begin with the raw amino-acid sequence, 983 residues long: Bifunctional glutamine synthetase adenylyltransferase/adenylyl-removing enzyme (983 aa).

The segment at 1 to 468 (MTVENAKALF…KQYAALFEQA (468 aa)) is adenylyl removase. The interval 473 to 983 (AASGNLVFTG…FDKLVGHGAD (511 aa)) is adenylyl transferase.

The protein belongs to the GlnE family. Mg(2+) serves as cofactor.

It catalyses the reaction [glutamine synthetase]-O(4)-(5'-adenylyl)-L-tyrosine + phosphate = [glutamine synthetase]-L-tyrosine + ADP. The catalysed reaction is [glutamine synthetase]-L-tyrosine + ATP = [glutamine synthetase]-O(4)-(5'-adenylyl)-L-tyrosine + diphosphate. In terms of biological role, involved in the regulation of glutamine synthetase GlnA, a key enzyme in the process to assimilate ammonia. When cellular nitrogen levels are high, the C-terminal adenylyl transferase (AT) inactivates GlnA by covalent transfer of an adenylyl group from ATP to specific tyrosine residue of GlnA, thus reducing its activity. Conversely, when nitrogen levels are low, the N-terminal adenylyl removase (AR) activates GlnA by removing the adenylyl group by phosphorolysis, increasing its activity. The regulatory region of GlnE binds the signal transduction protein PII (GlnB) which indicates the nitrogen status of the cell. This Brucella melitensis biotype 1 (strain ATCC 23456 / CCUG 17765 / NCTC 10094 / 16M) protein is Bifunctional glutamine synthetase adenylyltransferase/adenylyl-removing enzyme.